Here is a 289-residue protein sequence, read N- to C-terminus: ATP synthase gamma chain (289 aa).

This sequence belongs to the ATPase gamma chain family. F-type ATPases have 2 components, CF(1) - the catalytic core - and CF(0) - the membrane proton channel. CF(1) has five subunits: alpha(3), beta(3), gamma(1), delta(1), epsilon(1). CF(0) has three main subunits: a, b and c.

It is found in the cell inner membrane. Its function is as follows. Produces ATP from ADP in the presence of a proton gradient across the membrane. The gamma chain is believed to be important in regulating ATPase activity and the flow of protons through the CF(0) complex. In Janthinobacterium sp. (strain Marseille) (Minibacterium massiliensis), this protein is ATP synthase gamma chain.